Reading from the N-terminus, the 425-residue chain is Adenosylhomocysteinase (425 aa).

Residues threonine 60, aspartate 132, and glutamate 157 each contribute to the substrate site. 158-160 (TTT) provides a ligand contact to NAD(+). Residues lysine 187 and aspartate 191 each coordinate substrate. Residues asparagine 192, 221 to 226 (GYGWCG), glutamate 244, asparagine 279, 300 to 302 (SGH), and asparagine 347 each bind NAD(+).

It belongs to the adenosylhomocysteinase family. Requires NAD(+) as cofactor.

It localises to the cytoplasm. It carries out the reaction S-adenosyl-L-homocysteine + H2O = L-homocysteine + adenosine. Its pathway is amino-acid biosynthesis; L-homocysteine biosynthesis; L-homocysteine from S-adenosyl-L-homocysteine: step 1/1. May play a key role in the regulation of the intracellular concentration of adenosylhomocysteine. The protein is Adenosylhomocysteinase of Nostoc sp. (strain PCC 7120 / SAG 25.82 / UTEX 2576).